The sequence spans 157 residues: Large ribosomal subunit protein bL17 (157 aa).

The tract at residues 124 to 157 (AAPVVSKQDRAKRVKGSKKAESRSQENEGGDAAE) is disordered.

This sequence belongs to the bacterial ribosomal protein bL17 family. As to quaternary structure, part of the 50S ribosomal subunit. Contacts protein L32.

The chain is Large ribosomal subunit protein bL17 from Chlorobaculum tepidum (strain ATCC 49652 / DSM 12025 / NBRC 103806 / TLS) (Chlorobium tepidum).